Reading from the N-terminus, the 381-residue chain is tRNA pseudouridine synthase D (381 aa).

Catalysis depends on D81, which acts as the Nucleophile. The TRUD domain occupies 160 to 335 (GMPNYFGSQR…TLGSRRFFWV (176 aa)).

The protein belongs to the pseudouridine synthase TruD family.

The enzyme catalyses uridine(13) in tRNA = pseudouridine(13) in tRNA. In terms of biological role, responsible for synthesis of pseudouridine from uracil-13 in transfer RNAs. This Helicobacter acinonychis (strain Sheeba) protein is tRNA pseudouridine synthase D.